The following is a 149-amino-acid chain: Large ribosomal subunit protein bL9 (149 aa).

Belongs to the bacterial ribosomal protein bL9 family.

Binds to the 23S rRNA. In Legionella pneumophila (strain Paris), this protein is Large ribosomal subunit protein bL9.